We begin with the raw amino-acid sequence, 517 residues long: Steroid 17-alpha-hydroxylase/17,20 lyase (517 aa).

Cysteine 451 is a heme binding site.

This sequence belongs to the cytochrome P450 family. It depends on heme as a cofactor.

It is found in the membrane. The catalysed reaction is a C21-steroid + reduced [NADPH--hemoprotein reductase] + O2 = a 17alpha-hydroxy-C21-steroid + oxidized [NADPH--hemoprotein reductase] + H2O + H(+). The enzyme catalyses 17alpha-hydroxyprogesterone + reduced [NADPH--hemoprotein reductase] + O2 = androst-4-ene-3,17-dione + acetate + oxidized [NADPH--hemoprotein reductase] + H2O + 2 H(+). It catalyses the reaction 17alpha-hydroxypregnenolone + reduced [NADPH--hemoprotein reductase] + O2 = 3beta-hydroxyandrost-5-en-17-one + acetate + oxidized [NADPH--hemoprotein reductase] + H2O + 2 H(+). Its pathway is lipid metabolism; steroid biosynthesis. Conversion of pregnenolone and progesterone to their 17-alpha-hydroxylated products and subsequently to dehydroepiandrosterone (DHEA) and androstenedione. Catalyzes both the 17-alpha-hydroxylation and the 17,20-lyase reaction. This chain is Steroid 17-alpha-hydroxylase/17,20 lyase (cyp17a1), found in Oryzias latipes (Japanese rice fish).